Here is a 295-residue protein sequence, read N- to C-terminus: WHI2-like protein P4H10.16c (295 aa).

This sequence belongs to the WHI2 family.

The protein localises to the cytoplasm. It localises to the nucleus. The sequence is that of WHI2-like protein P4H10.16c from Schizosaccharomyces pombe (strain 972 / ATCC 24843) (Fission yeast).